A 365-amino-acid chain; its full sequence is Alanine racemase (365 aa).

Residue lysine 32 is the Proton acceptor; specific for D-alanine of the active site. Lysine 32 is modified (N6-(pyridoxal phosphate)lysine). Arginine 128 is a binding site for substrate. Tyrosine 257 (proton acceptor; specific for L-alanine) is an active-site residue. Methionine 305 serves as a coordination point for substrate.

This sequence belongs to the alanine racemase family. It depends on pyridoxal 5'-phosphate as a cofactor.

It carries out the reaction L-alanine = D-alanine. It participates in amino-acid biosynthesis; D-alanine biosynthesis; D-alanine from L-alanine: step 1/1. In terms of biological role, catalyzes the interconversion of L-alanine and D-alanine. May also act on other amino acids. This Francisella tularensis subsp. mediasiatica (strain FSC147) protein is Alanine racemase (alr).